Here is a 383-residue protein sequence, read N- to C-terminus: uncharacterized protein (383 aa).

The protein belongs to the peptidase M20 family.

This is an uncharacterized protein from Staphylococcus haemolyticus (strain JCSC1435).